Reading from the N-terminus, the 497-residue chain is Serine hydroxymethyltransferase (497 aa).

(6S)-5,6,7,8-tetrahydrofolate-binding positions include Leu-176 and 180–182 (GHL). N6-(pyridoxal phosphate)lysine is present on Lys-289.

It belongs to the SHMT family. Homodimer. Pyridoxal 5'-phosphate is required as a cofactor.

It localises to the cytoplasm. It carries out the reaction (6R)-5,10-methylene-5,6,7,8-tetrahydrofolate + glycine + H2O = (6S)-5,6,7,8-tetrahydrofolate + L-serine. The protein operates within one-carbon metabolism; tetrahydrofolate interconversion. Its pathway is amino-acid biosynthesis; glycine biosynthesis; glycine from L-serine: step 1/1. Its function is as follows. Catalyzes the reversible interconversion of serine and glycine with tetrahydrofolate (THF) serving as the one-carbon carrier. This reaction serves as the major source of one-carbon groups required for the biosynthesis of purines, thymidylate, methionine, and other important biomolecules. Also exhibits THF-independent aldolase activity toward beta-hydroxyamino acids, producing glycine and aldehydes, via a retro-aldol mechanism. The sequence is that of Serine hydroxymethyltransferase from Chlamydia caviae (strain ATCC VR-813 / DSM 19441 / 03DC25 / GPIC) (Chlamydophila caviae).